Here is a 1234-residue protein sequence, read N- to C-terminus: ATP-dependent helicase/nuclease subunit A (1234 aa).

The 474-residue stretch at 2–475 folds into the UvrD-like helicase ATP-binding domain; that stretch reads TQFTTSQQAA…IILAENFRST (474 aa). Residue 23-30 participates in ATP binding; it reads ASAGSGKT. The UvrD-like helicase C-terminal domain occupies 507–806; it reads YGALDYGDAH…KLMTIHKSKG (300 aa).

The protein belongs to the helicase family. AddA subfamily. In terms of assembly, heterodimer of AddA and AddB/RexB. The cofactor is Mg(2+).

The catalysed reaction is Couples ATP hydrolysis with the unwinding of duplex DNA by translocating in the 3'-5' direction.. It catalyses the reaction ATP + H2O = ADP + phosphate + H(+). Its function is as follows. The heterodimer acts as both an ATP-dependent DNA helicase and an ATP-dependent, dual-direction single-stranded exonuclease. Recognizes the chi site generating a DNA molecule suitable for the initiation of homologous recombination. The AddA nuclease domain is required for chi fragment generation; this subunit has the helicase and 3' -&gt; 5' nuclease activities. The chain is ATP-dependent helicase/nuclease subunit A from Lacticaseibacillus casei (strain BL23) (Lactobacillus casei).